Consider the following 98-residue polypeptide: Gene 4 protein (98 aa).

Residues 38-73 form the HNH domain; that stretch reads GCVRAATDVDHIKRGNDHSRSNLQAACHVCHGKKSA. Residues 75–98 form a disordered region; that stretch reads EGVARRRELRARRKRPPERHPGRR. The span at 81–98 shows a compositional bias: basic residues; that stretch reads RELRARRKRPPERHPGRR.

The sequence is that of Gene 4 protein (4) from Mycobacterium (Mycobacteriophage L5).